A 73-amino-acid polypeptide reads, in one-letter code: Neuropeptide-like protein 29 (73 aa).

The first 22 residues, 1-22 (MISTSSILVLVVLLACFMAASA), serve as a signal peptide directing secretion. Tyrosine amide occurs at positions 29, 39, 47, 55, and 63. At Trp-71 the chain carries Tryptophan amide.

It belongs to the YARP (YGGW-amide related peptide) family. Weakly or not expressed in absence of infection. Upon infection by D.coniospora, it is expressed in hypoderm. Also expressed in perivulval cells when D.coniospora spores adhere to this region. Expressed in hypodermis upon physical injury.

The protein resides in the secreted. Its function is as follows. Antimicrobial peptides that have antibacterial activity against the Gram-negative bacteria S.marcescens. Has antifungal activity against D.coniospora. May play a role in response to physical injury and osmotic stress. Through the neuropeptide receptor nlp-29, induces sleep upon activation of the innate immune response to molting and injury to the adult epidermis. This chain is Neuropeptide-like protein 29, found in Caenorhabditis elegans.